A 739-amino-acid polypeptide reads, in one-letter code: Vascular cell adhesion protein 1 (739 aa).

The first 24 residues, 1-24, serve as a signal peptide directing secretion; the sequence is MPGKMVVILGASNILWIMFAASQA. 7 consecutive Ig-like C2-type domains span residues 25-105, 109-212, 223-309, 312-399, 408-506, 511-595, and 600-684; these read FKIE…RKLE, QVEI…TVRQ, PKNT…LIVQ, PFTV…IQVE, EIEM…QTLY, PRDT…VELI, and PKDI…LTLD. At 25–698 the chain is on the extracellular side; the sequence is FKIETTPESR…ENNKDYFSPE (674 aa). Cystine bridges form between cysteine 47-cysteine 95, cysteine 52-cysteine 99, cysteine 137-cysteine 195, cysteine 246-cysteine 291, and cysteine 335-cysteine 383. 6 N-linked (GlcNAc...) asparagine glycosylation sites follow: asparagine 273, asparagine 365, asparagine 417, asparagine 463, asparagine 531, and asparagine 561. Cysteines 534 and 579 form a disulfide. The chain crosses the membrane as a helical span at residues 699 to 720; the sequence is LLVLYFASSLIIPAIGMIIYFA. Over 721–739 the chain is Cytoplasmic; that stretch reads RKANMKGSYSLVEAQKSKV.

In terms of processing, cleaved by the metalloproteinase ADAM17 to generate the soluble form. Sialoglycoprotein. Post-translationally, ubiquitinated by TRIM65 via 'Lys-48'-linked ubiquitination; leading to proteasomal degradation. As to expression, expressed on inflamed vascular endothelium, as well as on macrophage-like and dendritic cell types in both normal and inflamed tissue.

The protein localises to the cell membrane. It is found in the secreted. In terms of biological role, cell adhesion glycoprotein predominantly expressed on the surface of endothelial cells that plays an important role in immune surveillance and inflammation. Acts as a major regulator of leukocyte adhesion to the endothelium through interaction with different types of integrins. During inflammatory responses, binds ligands on the surface of activated endothelial cells to initiate the activation of calcium channels and the plasma membrane-associated small GTPase RAC1 leading to leukocyte transendothelial migration. Also serves as a quality-control checkpoint for entry into bone marrow by providing a 'don't-eat-me' stamping in the context of major histocompatibility complex (MHC) class-I presentation. The polypeptide is Vascular cell adhesion protein 1 (VCAM1) (Homo sapiens (Human)).